We begin with the raw amino-acid sequence, 342 residues long: Adenylate isopentenyltransferase 6, chloroplastic (342 aa).

A chloroplast-targeting transit peptide spans 1–33; the sequence is MQQLMTLLSPPLSHSSLLPTVTTKFGSPRLVTT. 52-59 provides a ligand contact to ATP; the sequence is GTTGTGKS.

Belongs to the IPP transferase family. As to expression, expressed in siliques, at the mRNA level.

The protein resides in the plastid. Its subcellular location is the chloroplast. The enzyme catalyses dimethylallyl diphosphate + ADP = N(6)-(dimethylallyl)adenosine 5'-diphosphate + diphosphate. It catalyses the reaction dimethylallyl diphosphate + ATP = N(6)-(dimethylallyl)adenosine 5'-triphosphate + diphosphate. Its function is as follows. Involved in cytokinin biosynthesis. Catalyzes the transfer of an isopentenyl group from dimethylallyl diphosphate (DMAPP) to ATP and ADP. This is Adenylate isopentenyltransferase 6, chloroplastic (IPT6) from Arabidopsis thaliana (Mouse-ear cress).